Consider the following 756-residue polypeptide: DNA mismatch repair protein Mlh1 (756 aa).

The residue at position 2 (S2) is an N-acetylserine. An N6-acetyllysine modification is found at K33. ATP is bound by residues N38, D63, 82 to 84 (TSK), and 100 to 104 (RGEAL). N6-acetyllysine occurs at positions 241 and 361. Disordered regions lie at residues 355–378 (PSGE…SDKV) and 400–491 (LSKP…KEMT). Over residues 362 to 375 (STTSLTSSSTSGSS) the composition is skewed to low complexity. The residue at position 377 (K377) is an N6-acetyllysine. Residues 410-650 (AIVTEDKTDI…LLIDNYVPPL (241 aa)) form an interaction with EXO1 region. The span at 443-457 (KNQSLEGDTTKGTSE) shows a compositional bias: polar residues. The Nuclear localization signal signature appears at 471 to 474 (KRHR). Position 477 is a phosphoserine (S477).

The protein belongs to the DNA mismatch repair MutL/HexB family. As to quaternary structure, component of the DNA mismatch repair (MMR) complex composed at least of MSH2, MSH3, MSH6, PMS1 and MLH1. Heterodimer of MLH1 and PMS2 (MutL alpha), MLH1 and PMS1 (MutL beta) or MLH1 and MLH3 (MutL gamma). Forms a ternary complex with MutS alpha (MSH2-MSH6) or MutS beta (MSH2-MSH3). Part of the BRCA1-associated genome surveillance complex (BASC), which contains BRCA1, MSH2, MSH6, MLH1, ATM, BLM, PMS2 and the RAD50-MRE11-NBS1 protein complex. This association could be a dynamic process changing throughout the cell cycle and within subnuclear domains. Interacts with MCM9; the interaction recruits MLH1 to chromatin. Interacts with MCM8. Interacts with PMS2; this interaction promotes MLH1 stability. Interacts with MBD4. Interacts with EXO1. Interacts with MTMR15/FAN1. Acetylated. Deacetylated by HDAC6 which prevents the MutL alpha complex, formed by the MLH1-PMS2 heterodimer, from being recruited to the MutS alpha complex, formed by the MSH2-MSH6 heterodimer, leading to tolerance of DNA damage. In terms of processing, ubiquitinated by UBR4; leading to proteasomal degradation. This ubiquitination is counteracted by the deubiquitinase USP5. As to expression, colon, lymphocytes, breast, lung, spleen, testis, prostate, thyroid, gall bladder and heart.

The protein localises to the nucleus. The protein resides in the chromosome. Heterodimerizes with PMS2 to form MutL alpha, a component of the post-replicative DNA mismatch repair system (MMR). DNA repair is initiated by MutS alpha (MSH2-MSH6) or MutS beta (MSH2-MSH3) binding to a dsDNA mismatch, then MutL alpha is recruited to the heteroduplex. Assembly of the MutL-MutS-heteroduplex ternary complex in presence of RFC and PCNA is sufficient to activate endonuclease activity of PMS2. It introduces single-strand breaks near the mismatch and thus generates new entry points for the exonuclease EXO1 to degrade the strand containing the mismatch. DNA methylation would prevent cleavage and therefore assure that only the newly mutated DNA strand is going to be corrected. MutL alpha (MLH1-PMS2) interacts physically with the clamp loader subunits of DNA polymerase III, suggesting that it may play a role to recruit the DNA polymerase III to the site of the MMR. Also implicated in DNA damage signaling, a process which induces cell cycle arrest and can lead to apoptosis in case of major DNA damages. Heterodimerizes with MLH3 to form MutL gamma which plays a role in meiosis. This is DNA mismatch repair protein Mlh1 (MLH1) from Homo sapiens (Human).